Consider the following 372-residue polypeptide: MHNQAPIQRRKSTRIYVGNVPIGDGAPIAVQSMTNTRTTDVEATVNQIKALERVGADIVRVSVPTMDAAEAFKLIKQQVNVPLVADIHFDYRIALKVAEYGVDCLRINPGNIGNEERIRMVVDCARDKNIPIRIGVNAGSLEKDLQEKYGEPTPQALLESAMRHVDHLDRLNFEQFKVSVKASDVFLAVESYRLLAKQIDQPLHLGITEAGGARSGAVKSAIGLGLLLSEGIGDTLRVSLAADPVEEIKVGFDILKSLRIRSRGINFIACPTCSRQEFDVIGTVNALEQRLEDIITPMDVSIIGCVVNGPGEALVSTLGVTGGNKKSGLYEDGVRKDRLDNNDMIDQLEARIRAKASQLDEARRIDVQQVEK.

Residues Cys270, Cys273, Cys305, and Glu312 each coordinate [4Fe-4S] cluster.

The protein belongs to the IspG family. [4Fe-4S] cluster is required as a cofactor.

The enzyme catalyses (2E)-4-hydroxy-3-methylbut-2-enyl diphosphate + oxidized [flavodoxin] + H2O + 2 H(+) = 2-C-methyl-D-erythritol 2,4-cyclic diphosphate + reduced [flavodoxin]. Its pathway is isoprenoid biosynthesis; isopentenyl diphosphate biosynthesis via DXP pathway; isopentenyl diphosphate from 1-deoxy-D-xylulose 5-phosphate: step 5/6. Converts 2C-methyl-D-erythritol 2,4-cyclodiphosphate (ME-2,4cPP) into 1-hydroxy-2-methyl-2-(E)-butenyl 4-diphosphate. The sequence is that of 4-hydroxy-3-methylbut-2-en-1-yl diphosphate synthase (flavodoxin) from Escherichia coli (strain SMS-3-5 / SECEC).